A 238-amino-acid chain; its full sequence is 7-cyano-7-deazaguanine synthase 1 (238 aa).

14-24 (FSGGQDSATCL) lines the ATP pocket. Zn(2+)-binding residues include Cys-202, Cys-217, Cys-220, and Cys-223.

This sequence belongs to the QueC family. Zn(2+) serves as cofactor.

The enzyme catalyses 7-carboxy-7-deazaguanine + NH4(+) + ATP = 7-cyano-7-deazaguanine + ADP + phosphate + H2O + H(+). The protein operates within purine metabolism; 7-cyano-7-deazaguanine biosynthesis. Functionally, catalyzes the ATP-dependent conversion of 7-carboxy-7-deazaguanine (CDG) to 7-cyano-7-deazaguanine (preQ(0)). This Rhodopseudomonas palustris (strain HaA2) protein is 7-cyano-7-deazaguanine synthase 1.